A 503-amino-acid chain; its full sequence is UDP-N-acetylmuramoylalanine--D-glutamate ligase (503 aa).

An ATP-binding site is contributed by 129 to 135 (GTNGKTT).

It belongs to the MurCDEF family.

The protein localises to the cytoplasm. It carries out the reaction UDP-N-acetyl-alpha-D-muramoyl-L-alanine + D-glutamate + ATP = UDP-N-acetyl-alpha-D-muramoyl-L-alanyl-D-glutamate + ADP + phosphate + H(+). It functions in the pathway cell wall biogenesis; peptidoglycan biosynthesis. In terms of biological role, cell wall formation. Catalyzes the addition of glutamate to the nucleotide precursor UDP-N-acetylmuramoyl-L-alanine (UMA). This is UDP-N-acetylmuramoylalanine--D-glutamate ligase from Burkholderia vietnamiensis (strain G4 / LMG 22486) (Burkholderia cepacia (strain R1808)).